We begin with the raw amino-acid sequence, 158 residues long: NAD(P)H-quinone oxidoreductase subunit J, chloroplastic (158 aa).

It belongs to the complex I 30 kDa subunit family. In terms of assembly, NDH is composed of at least 16 different subunits, 5 of which are encoded in the nucleus.

It is found in the plastid. Its subcellular location is the chloroplast thylakoid membrane. The enzyme catalyses a plastoquinone + NADH + (n+1) H(+)(in) = a plastoquinol + NAD(+) + n H(+)(out). The catalysed reaction is a plastoquinone + NADPH + (n+1) H(+)(in) = a plastoquinol + NADP(+) + n H(+)(out). Its function is as follows. NDH shuttles electrons from NAD(P)H:plastoquinone, via FMN and iron-sulfur (Fe-S) centers, to quinones in the photosynthetic chain and possibly in a chloroplast respiratory chain. The immediate electron acceptor for the enzyme in this species is believed to be plastoquinone. Couples the redox reaction to proton translocation, and thus conserves the redox energy in a proton gradient. In Piper cenocladum (Ant piper), this protein is NAD(P)H-quinone oxidoreductase subunit J, chloroplastic.